The chain runs to 86 residues: Anti-adapter protein IraP (86 aa).

The stretch at 1-36 (MKNLIAELLLKLAQKEEESKELCAQVEALEIIVTAM) forms a coiled coil.

The protein belongs to the IraP family. As to quaternary structure, interacts with RssB.

It is found in the cytoplasm. Functionally, inhibits RpoS proteolysis by regulating RssB activity, thereby increasing the stability of the sigma stress factor RpoS especially during phosphate starvation, but also in stationary phase and during nitrogen starvation. Its effect on RpoS stability is due to its interaction with RssB, which probably blocks the interaction of RssB with RpoS, and the consequent delivery of the RssB-RpoS complex to the ClpXP protein degradation pathway. The chain is Anti-adapter protein IraP from Shigella boydii serotype 18 (strain CDC 3083-94 / BS512).